A 321-amino-acid chain; its full sequence is Ribose-phosphate pyrophosphokinase 2 (321 aa).

Mg(2+) is bound by residues aspartate 130, histidine 132, and aspartate 145. Residue serine 172 is modified to Phosphoserine.

This sequence belongs to the ribose-phosphate pyrophosphokinase family.

It localises to the cytoplasm. It catalyses the reaction D-ribose 5-phosphate + ATP = 5-phospho-alpha-D-ribose 1-diphosphate + AMP + H(+). It participates in metabolic intermediate biosynthesis; 5-phospho-alpha-D-ribose 1-diphosphate biosynthesis; 5-phospho-alpha-D-ribose 1-diphosphate from D-ribose 5-phosphate (route I): step 1/1. In terms of biological role, 5-phosphoribose 1-diphosphate synthase involved in nucleotide, histidine, and tryptophan biosynthesis. Active in heteromultimeric complexes with other 5-phosphoribose 1-diphosphate synthases. In Schizosaccharomyces pombe (strain 972 / ATCC 24843) (Fission yeast), this protein is Ribose-phosphate pyrophosphokinase 2.